The sequence spans 404 residues: Glucose-1-phosphate adenylyltransferase (404 aa).

Residues Tyr99, Gly164, 179-180 (EK), and Ser197 contribute to the alpha-D-glucose 1-phosphate site.

This sequence belongs to the bacterial/plant glucose-1-phosphate adenylyltransferase family. As to quaternary structure, homotetramer.

It catalyses the reaction alpha-D-glucose 1-phosphate + ATP + H(+) = ADP-alpha-D-glucose + diphosphate. It participates in glycan biosynthesis; glycogen biosynthesis. Functionally, involved in the biosynthesis of ADP-glucose, a building block required for the elongation reactions to produce glycogen. Catalyzes the reaction between ATP and alpha-D-glucose 1-phosphate (G1P) to produce pyrophosphate and ADP-Glc. This is Glucose-1-phosphate adenylyltransferase from Rhodococcus erythropolis (strain PR4 / NBRC 100887).